A 184-amino-acid chain; its full sequence is MKYSVAFVALAAVAAQAQSLADVPKCAIPCLDKAIASETSCDKTDLACVCKGFSAVRSKATSCVIDECGTDVAINEVLPATENLCKNPPKESEAKSTAEEEKPTTTAAATSTLVVVTTSAEVVETTAAATTTVAPIIPTTAAEEPATSTPAAATPTKGPEQANGAAGLKGLGALAMAAFAALAL.

Residues 1-17 (MKYSVAFVALAAVAAQA) form the signal peptide. The region spanning 18–112 (QSLADVPKCA…PTTTAAATST (95 aa)) is the CFEM domain. Cystine bridges form between Cys-26/Cys-68, Cys-30/Cys-63, Cys-41/Cys-48, and Cys-50/Cys-85. Asp-45 lines the heme pocket. Disordered stretches follow at residues 83–106 (NLCKNPPKESEAKSTAEEEKPTTT) and 136–163 (IIPTTAAEEPATSTPAAATPTKGPEQAN). Positions 88-103 (PPKESEAKSTAEEEKP) are enriched in basic and acidic residues. A lipid anchor (GPI-anchor amidated asparagine) is attached at Asn-163. Positions 164-184 (GAAGLKGLGALAMAAFAALAL) are cleaved as a propeptide — removed in mature form.

It belongs to the RBT5 family. Interacts with Z.mays LRR5; the interaction is direct. Interacts (via CFEM domain) with Z.mays WAK17 isoform 2; the interaction is direct.

It localises to the secreted. Its subcellular location is the cell wall. The protein resides in the cell membrane. The protein localises to the cell septum. It is found in the cytoplasm. Its function is as follows. Suppresses host programmed cell death during infection by binding to Z.mays WAK17 isoform 2 and Z.mays LRR5, to prevent activation of Z.mays WAK17 isoform 1 and the downstream hypersensitive response. This chain is Effector CFEM1, found in Gibberella zeae (strain ATCC MYA-4620 / CBS 123657 / FGSC 9075 / NRRL 31084 / PH-1) (Wheat head blight fungus).